Reading from the N-terminus, the 342-residue chain is tRNA-dihydrouridine(20/20a) synthase (342 aa).

FMN contacts are provided by residues 10 to 12 (PMV) and Gln-63. The active-site Proton donor is Cys-93. FMN is bound by residues Lys-132, His-164, 203–205 (NGG), and 225–226 (GR). Over residues 313–331 (EEEVGEEGEKEKPGPRGQR) the composition is skewed to basic and acidic residues. The tract at residues 313 to 342 (EEEVGEEGEKEKPGPRGQREAAPGPAREGV) is disordered.

It belongs to the Dus family. DusA subfamily. It depends on FMN as a cofactor.

The catalysed reaction is 5,6-dihydrouridine(20) in tRNA + NADP(+) = uridine(20) in tRNA + NADPH + H(+). The enzyme catalyses 5,6-dihydrouridine(20) in tRNA + NAD(+) = uridine(20) in tRNA + NADH + H(+). It carries out the reaction 5,6-dihydrouridine(20a) in tRNA + NADP(+) = uridine(20a) in tRNA + NADPH + H(+). It catalyses the reaction 5,6-dihydrouridine(20a) in tRNA + NAD(+) = uridine(20a) in tRNA + NADH + H(+). Catalyzes the synthesis of 5,6-dihydrouridine (D), a modified base found in the D-loop of most tRNAs, via the reduction of the C5-C6 double bond in target uridines. Specifically modifies U20 and U20a in tRNAs. The protein is tRNA-dihydrouridine(20/20a) synthase (dus) of Thermus thermophilus (strain ATCC 27634 / DSM 579 / HB8).